Consider the following 684-residue polypeptide: Glycine--tRNA ligase beta subunit (684 aa).

Belongs to the class-II aminoacyl-tRNA synthetase family. As to quaternary structure, tetramer of two alpha and two beta subunits.

The protein resides in the cytoplasm. The catalysed reaction is tRNA(Gly) + glycine + ATP = glycyl-tRNA(Gly) + AMP + diphosphate. The chain is Glycine--tRNA ligase beta subunit from Pseudomonas savastanoi pv. phaseolicola (strain 1448A / Race 6) (Pseudomonas syringae pv. phaseolicola (strain 1448A / Race 6)).